The chain runs to 100 residues: uncharacterized protein (100 aa).

2 helical membrane passes run 1–21 (MLVLVFLIGLSACFYVYYKVK) and 54–74 (MILFHSVLTLVIGGIFIVIGA).

The protein resides in the cell membrane. This is an uncharacterized protein from Bacillus subtilis (strain 168).